Reading from the N-terminus, the 180-residue chain is Nascent polypeptide-associated complex subunit alpha (180 aa).

The NAC-A/B domain occupies 16-80; the sequence is SKNEKKAREL…AKVDDMNKRI (65 aa). A disordered region spans residues 81-113; it reads AEAQQQQAQQDALSKAAGETGEAGEEDKSQDAI. Residues 82–100 are compositionally biased toward low complexity; the sequence is EAQQQQAQQDALSKAAGET. Positions 142 to 179 constitute a UBA domain; sequence LDAKDIDIIVEQTQVSRAKAVKALRVHDGDMVNAIMEL.

It belongs to the NAC-alpha family. As to quaternary structure, part of the nascent polypeptide-associated complex (NAC), consisting of EGD2 and EGD1. NAC associates with ribosomes via EGD1.

The protein localises to the cytoplasm. It localises to the nucleus. Component of the nascent polypeptide-associated complex (NAC), a dynamic component of the ribosomal exit tunnel, protecting the emerging polypeptides from interaction with other cytoplasmic proteins to ensure appropriate nascent protein targeting. The NAC complex also promotes mitochondrial protein import by enhancing productive ribosome interactions with the outer mitochondrial membrane and blocks the inappropriate interaction of ribosomes translating non-secretory nascent polypeptides with translocation sites in the membrane of the endoplasmic reticulum. EGD2 may also be involved in transcription regulation. The protein is Nascent polypeptide-associated complex subunit alpha (EGD2) of Debaryomyces hansenii (strain ATCC 36239 / CBS 767 / BCRC 21394 / JCM 1990 / NBRC 0083 / IGC 2968) (Yeast).